We begin with the raw amino-acid sequence, 507 residues long: Probable Xaa-Pro aminopeptidase HCBG_01484 (507 aa).

Residues Asp283, Asp294, Glu431, and Glu469 each coordinate Mn(2+).

This sequence belongs to the peptidase M24B family. Requires Mn(2+) as cofactor.

It catalyses the reaction Release of any N-terminal amino acid, including proline, that is linked to proline, even from a dipeptide or tripeptide.. Its function is as follows. Catalyzes the removal of a penultimate prolyl residue from the N-termini of peptides. The sequence is that of Probable Xaa-Pro aminopeptidase HCBG_01484 from Ajellomyces capsulatus (strain G186AR / H82 / ATCC MYA-2454 / RMSCC 2432) (Darling's disease fungus).